The sequence spans 1588 residues: Ubiquitin carboxyl-terminal hydrolase 54 (1588 aa).

Arginine 12 carries the post-translational modification Omega-N-methylarginine. Residues 31-352 (KGLSNEPGQN…QPLLLLYADP (322 aa)) form the USP domain. Cysteine 42 functions as the Nucleophile in the catalytic mechanism. The Zn(2+) site is built by histidine 67, cysteine 69, cysteine 74, cysteine 77, histidine 133, cysteine 145, cysteine 150, histidine 153, cysteine 166, cysteine 169, cysteine 225, and cysteine 229. Catalysis depends on histidine 302, which acts as the Proton acceptor. 2 stretches are compositionally biased toward basic and acidic residues: residues 382–391 (GHLTDSECNQ) and 424–434 (SEGETLKEKQA). 3 disordered regions span residues 382–519 (GHLT…PTWR), 555–577 (FTPDEVSKPTANDIKDGGSRSQH), and 601–624 (ESGYESSERNSSSPVSLDAAPPDS). Phosphoserine is present on serine 424. Residues 453-471 (TVSNMIHSRPSLASQTSAG) are compositionally biased toward polar residues. Residues 499-513 (TESTSSEAKSSSSSK) are compositionally biased toward low complexity. The segment covering 555 to 572 (FTPDEVSKPTANDIKDGG) has biased composition (basic and acidic residues). Residues 601 to 616 (ESGYESSERNSSSPVS) show a composition bias toward low complexity. A phosphoserine mark is found at serine 613 and serine 616. Positions 682–712 (ELDELQEEVVRRAQEQELRKKREKELEAAKG) form a coiled coil. Disordered stretches follow at residues 801–834 (RSLQDRMQQQASSQQPVQPSASLPSQGGALPQPT), 1089–1182 (QNTS…PDMY), 1221–1242 (SQVKPSAPGPGDKSSSHDSHPR), and 1491–1561 (WGNL…RSPG). Over residues 808–826 (QQQASSQQPVQPSASLPSQ) the composition is skewed to low complexity. The span at 1126 to 1147 (GREHCRWVKQPRSPDGRERPPC) shows a compositional bias: basic and acidic residues. Serine 1138 is subject to Phosphoserine. Positions 1510–1524 (PSSNLHVPLRSTWNS) are enriched in polar residues. The segment covering 1536 to 1547 (RRIDMPPDDDWR) has biased composition (basic and acidic residues).

It belongs to the peptidase C19 family.

It carries out the reaction Thiol-dependent hydrolysis of ester, thioester, amide, peptide and isopeptide bonds formed by the C-terminal Gly of ubiquitin (a 76-residue protein attached to proteins as an intracellular targeting signal).. Deubiquitinase that specifically mediates 'Lys-63'-linked deubiquitination of substrates with a polyubiquitin chain composed of at least 3 ubiquitins. Specifically recognizes ubiquitin chain in position S2 and catalyzes cleavage of polyubiquitin within 'Lys-63'-linked chains. Not able to deubiquitinate substrates with shorter ubiquitin chains. Mediates deubiquitination of PLK4, maintaining PLK4 stability by reducing its ubiquitination-mediated degradation. In Mus musculus (Mouse), this protein is Ubiquitin carboxyl-terminal hydrolase 54 (Usp54).